The sequence spans 637 residues: MSVRRTRKDDGSQWTVADSRSVYGIRHWGAGYFAINEAGRVEVRPNGPQSAPIDLFEQVDELRQSGLSLPLLVRFPDILQDRVRQLTGAFDANIARLEYQSQYTALYPIKVNQQEAVVENIIATQNVSIGLEAGSKPELLAVLALAPKGGTIVCNGYKDREFIRLALMGQKLGHNVFIVIEKESEVALVIEEAAELKVKPQVGLRVRLSSLASSKWADTGGEKSKFGLSAAQLLSVVQRFRDAGLDQGIRLLHFHMGSQIANLADYQHGFKEAIRYYGELRALGLPVDHIDVGGGLGVDYDGTHSRNASSINYDMDDYAGVVVGMLKEFCDAQGLPHPHIFSESGRSLTAHHAMLVIQVTDVEKHNDDVPTIENKEALPETVQWLVDLLGPTDIEMVTETYWRATHYMGDVAAQYADGKLSLGEKALAEQCYFAVCRRLHNSLKARQRSHRQVLDELNDKLADKYICNFSVFQSLPDTWAIGQVLPIIPLHRLDEEPMRRAVLQDLTCDSDGKINQYVDEQSIETSMPVHAVKEGEDYLLGVFLVGAYQEILGDMHNLFGDTDSVNIYQNADGSVYHAGIETHDTIEDMLRYVHLSPEELMTHYRDKVASAKITARERTQYLDALRLGLTRSSYLSS.

The residue at position 110 (Lys-110) is an N6-(pyridoxal phosphate)lysine. 290–300 contacts substrate; sequence IDVGGGLGVDY.

The protein belongs to the Orn/Lys/Arg decarboxylase class-II family. SpeA subfamily. Requires Mg(2+) as cofactor. It depends on pyridoxal 5'-phosphate as a cofactor.

The enzyme catalyses L-arginine + H(+) = agmatine + CO2. In terms of biological role, catalyzes the biosynthesis of agmatine from arginine. The sequence is that of Biosynthetic arginine decarboxylase from Pseudomonas putida (strain ATCC 47054 / DSM 6125 / CFBP 8728 / NCIMB 11950 / KT2440).